A 1759-amino-acid polypeptide reads, in one-letter code: Replicase polyprotein (1759 aa).

The DRBM domain occupies 23-90 (DKISTLKMVA…ARQMLLLLSG (68 aa)). Positions 113–140 (YTRLEKAIERRDDKIKTLIKELRRQIKN) form a coiled coil. The SF3 helicase domain maps to 421–595 (AKQLYEYVSC…KEYGIETEKG (175 aa)). 449–456 (GESGVGKT) contacts ATP. Residues 950 to 1191 (DAAHNLMIDV…YACPLTQECL (242 aa)) form the Peptidase C3 domain. Active-site for picornain 3C-like protease activity residues include histidine 994, aspartate 1054, and cysteine 1152. One can recognise a RdRp catalytic domain in the interval 1483–1622 (SHVIAGDFGN…NIDAKVVEWF (140 aa)).

Protein 1A might be expressed through a ribosomal skip from one codon to the next without formation of a peptide bond.

The catalysed reaction is RNA(n) + a ribonucleoside 5'-triphosphate = RNA(n+1) + diphosphate. Protein 1A functions as a suppressor of RNA-mediated gene silencing, an antiviral defense mechanism of insect cells. Binds to long dsRNA and to a lesser extent, to siRNA. Functionally, RNA-directed RNA polymerase replicates genomic and antigenomic RNA. This chain is Replicase polyprotein, found in Drosophila C virus (strain EB) (DCV).